Consider the following 326-residue polypeptide: MYGIEYTTILIFLTSITLLNYILKSITRIMDYIIYRFLLMVVILATIINAQNYGVNLPITGSMDTAYANSTQSEPFLTSTLCLYYPVEASNEIADTEWKDTLSQLFLTKGWPTGSVYFKEYADIAAFSVEPQLYCDYNLVLMKYDSTQKLDMSELADLILNEWLCNPMDITLYYYQQTDEANKWISMGSSCNVKVCPLNTQTLGIGCLITNPDTFETVATTEKLVITDVVDGVNHKLNVTTATCTIRNCKKLGPRENVAVIQVGGANILDITADPTTTPQTERMMRINWKKWWQCFYTVVDYVNQIIQTVSKRSRSLNSSAFYYRV.

Positions 1–50 (MYGIEYTTILIFLTSITLLNYILKSITRIMDYIIYRFLLMVVILATIINA) are cleaved as a signal peptide. Asn-69 is a glycosylation site (N-linked (GlcNAc...) asparagine; by host). 4 disulfides stabilise this stretch: Cys-82/Cys-135, Cys-165/Cys-249, Cys-191/Cys-244, and Cys-196/Cys-207. Position 95 (Asp-95) interacts with Ca(2+). Positions 165–167 (CNP) are CNP motif; interaction with ITGAV/ITGB3. Gln-177, Gly-206, Thr-214, Glu-216, Asp-228, Val-229, and Asp-231 together coordinate Ca(2+). An N-linked (GlcNAc...) asparagine; by host glycan is attached at Asn-238. The interval 253 to 255 (GPR) is GPR motif; interaction with ITGAX/ITGB2. Asp-301 provides a ligand contact to Ca(2+). Asn-318 carries an N-linked (GlcNAc...) asparagine; by host glycan.

This sequence belongs to the rotavirus VP7 family. Homotrimer; disulfide-linked. 2 Ca(2+) ions bound at each subunit interface in the trimer hold the trimer together. Interacts with the intermediate capsid protein VP6. Interacts with the outer capsid protein VP5*. N-glycosylated. In terms of processing, the N-terminus is blocked possibly by pyroglutamic acid.

It is found in the virion. It localises to the host endoplasmic reticulum lumen. Calcium-binding protein that interacts with rotavirus cell receptors once the initial attachment by VP4 has been achieved. Rotavirus attachment and entry into the host cell probably involves multiple sequential contacts between the outer capsid proteins VP4 and VP7, and the cell receptors. Following entry into the host cell, low intracellular or intravesicular Ca(2+) concentration probably causes the calcium-stabilized VP7 trimers to dissociate from the virion. This step is probably necessary for the membrane-disrupting entry step and the release of VP4, which is locked onto the virion by VP7. This Rotavirus A (strain RVA/Cow/United States/WC3/1981/G6P7[5]) (RV-A) protein is Outer capsid glycoprotein VP7.